Here is a 623-residue protein sequence, read N- to C-terminus: Putative disease resistance protein At5g47280 (623 aa).

2 consecutive NB-ARC domains span residues 2-51 (LFNL…VSQS) and 119-249 (VDPR…NMLV). Position 16 to 23 (16 to 23 (GMIGSGKT)) interacts with ATP. LRR repeat units follow at residues 488–511 (SLNS…SKLQ), 512–534 (ALQL…ICEL), 536–558 (RLVY…IGNV), and 560–581 (TLEK…AVSL).

Belongs to the disease resistance NB-LRR family.

Its function is as follows. Potential disease resistance protein. The chain is Putative disease resistance protein At5g47280 from Arabidopsis thaliana (Mouse-ear cress).